Reading from the N-terminus, the 717-residue chain is MEDLGENTTVLSTLRSLNNFISQRVEGGSGLDVSTAAPGSLQLQYEQSMQLEERAEQIRSKSYLIQMEREKMQMELSHKRARVELERAANTSARNYEREVDRNQELLARIRQLQEREAAAEEKMQEQLERHRLCKQSLDAASQQLREREDGLAAARETISSLKGRVSEMQLNAMDQKVQVKRLESEKQELKEQLELQQRKCQEASQKIQELQASQEERADHEQKIKDLEQKLCLQEQDAAVVKNMKSELLRLPRMERELKRLREENTHLREMKETNGLLTEELEGLQRKLGRQEKMQEALVDLELEKEKLLAKLQSWEKLDQTMGVNLRTPEDLSRFVVELQQRELTLKEKNNTITSSARGLEKAQQQLQDEVRQVSAQLLEERKKREIHEALARRLQKRIVLLTKERDGMRAILGSYDSELTQAEYSAQLTQRMWEAEDMVQKVHAHSSEMETQLSQALEELGVQKQRADTLEMELKMLRAQTSSAETSFPFCKEEVDALRLKVEELEGERSRLEQEKQALEMQMERLTLQGDYNQSRTKVLHMSLNPASMARKRQQEDHARLQGECERLRGLVHALERGGPIPADLEVASSLPSSKEVAELRKQVESAELKNQRLKEVFQTKIQEFRKVCYTLTGYQIDVTTENQYRLTSRYAEHQSDCLIFKATGPSGSKMQLLETEFSRSVPELIELHLLQQDSIPAFLSALTIELFSRQTSI.

Met1 is subject to N-acetylmethionine. Residue Ser16 is modified to Phosphoserine. The stretch at 46–631 (EQSMQLEERA…QTKIQEFRKV (586 aa)) forms a coiled coil. N6-acetyllysine; alternate is present on Lys61. Residue Lys61 forms a Glycyl lysine isopeptide (Lys-Gly) (interchain with G-Cter in SUMO2); alternate linkage. The short motif at 79 to 82 (KRAR) is the Nuclear localization signal element. A phosphoserine mark is found at Ser214 and Ser428. The necessary for interaction with NEK2 stretch occupies residues 380–532 (LLEERKKREI…EMQMERLTLQ (153 aa)). Residues 540–551 (TKVLHMSLNPAS) form a necessary for interaction with MAD2L1 region.

Belongs to the MAD1 family. In terms of assembly, homodimer. Dimerizes via its N- and C- terminal regions. Heterodimerizes with MAD2L1 in order to form a tetrameric MAD1L1-MAD2L1 core complex. Interacts with the closed conformation form of MAD2L1 (C-MAD2) and open conformation form of MAD2L1 (O-MAD2). It is unclear whether MAD1L1 dimerization promotes the conversion of closed to open conformation of MAD2L1. Formation of a heterotetrameric core complex containing two molecules each of MAD1L1 and of MAD2L1 promotes binding of another molecule of MAD2L1 to each MAD2L1, resulting in a heterohexamer. Perturbation of the original MAD1L1-MAD2L1 structure by the spindle checkpoint may decrease MAD2L1 affinity for MAD1L1. CDC20 can compete with MAD1L1 for MAD2L1 binding, until the attachment and/or tension dampen the checkpoint signal, preventing further release of MAD2L1 on to CDC20. Also able to interact with the BUB1/BUB3 complex. Interacts with NEK2. Interacts with TTK. Interacts with TPR; the interactions occurs in a microtubule-independent manner. Interacts with IK. Interacts with the viral Tax protein. Interacts with PRAP1. In terms of processing, phosphorylated; by BUB1. Become hyperphosphorylated in late S through M phases or after mitotic spindle damage.

It localises to the nucleus. Its subcellular location is the chromosome. The protein resides in the centromere. The protein localises to the kinetochore. It is found in the nucleus envelope. It localises to the cytoplasm. Its subcellular location is the cytoskeleton. The protein resides in the microtubule organizing center. The protein localises to the centrosome. It is found in the spindle. It localises to the spindle pole. Component of the spindle-assembly checkpoint that prevents the onset of anaphase until all chromosomes are properly aligned at the metaphase plate. Forms a heterotetrameric complex with the closed conformation form of MAD2L1 (C-MAD2) at unattached kinetochores during prometaphase, recruits an open conformation of MAD2L1 (O-MAD2) and promotes the conversion of O-MAD2 to C-MAD2, which ensures mitotic checkpoint signaling. The protein is Mitotic spindle assembly checkpoint protein MAD1 (MAD1L1) of Cricetulus griseus (Chinese hamster).